Reading from the N-terminus, the 409-residue chain is Putative competence-damage inducible protein (409 aa).

It belongs to the CinA family.

This Clostridium botulinum (strain Kyoto / Type A2) protein is Putative competence-damage inducible protein.